The following is a 786-amino-acid chain: LPS-assembly protein LptD (786 aa).

Positions 1–24 are cleaved as a signal peptide; the sequence is MSFTSRSLLASFTGCLLYGTPAIA.

It belongs to the LptD family. As to quaternary structure, component of the lipopolysaccharide transport and assembly complex. Interacts with LptE and LptA.

It localises to the cell outer membrane. In terms of biological role, together with LptE, is involved in the assembly of lipopolysaccharide (LPS) at the surface of the outer membrane. The polypeptide is LPS-assembly protein LptD (Aliivibrio fischeri (strain ATCC 700601 / ES114) (Vibrio fischeri)).